Here is a 397-residue protein sequence, read N- to C-terminus: Subtilisin-like serine protease Pen c 1 (397 aa).

The N-terminal stretch at 1–19 (MGFLKVLATSLATLAVVDA) is a signal peptide. Positions 20 to 115 (GTLLTASNTD…IEPDMIVNAT (96 aa)) are cleaved as a propeptide — removed in mature form. Positions 35–113 (SYIVVMNDDV…KYIEPDMIVN (79 aa)) constitute an Inhibitor I9 domain. Residues 125-397 (SWGLARISSK…SKLLYNGINV (273 aa)) form the Peptidase S8 domain. Active-site charge relay system residues include Asp157, His188, and Ser343.

This sequence belongs to the peptidase S8 family.

The protein resides in the secreted. Inhibited by 0.1 mM diisopropyl fluorophosphate (DFP), phenylmethanesulfonyl fluoride (PMSF), chymostatin and elastatinal. Not inhibited by N-alpha-p-tosyl-L-lysine chloromethylketone (TLCK), N-tosyl-L-phenylalanyl chloromethyl ketone (TPCK) or N-carbobenzoxy-L-phenylalanine chloromethylketone (ZPCK). Functionally, serine protease. Hydrolyzes azocasein. Cleaves peptide bonds of the oxidized insulin B chain preferably at 15-Leu-|-Tyr-16, but also at 4-Gln-|-His-5 and 24-Phe-|-Phe-25, and to a lesser extent at 5-His-|-Leu-6 and 25-Phe-|-Tyr-26. Hydrolyzes amide bonds between amino acids and 7-amino-4-methylcoumarin (AMC) in vitro. In Penicillium citrinum, this protein is Subtilisin-like serine protease Pen c 1.